The following is a 307-amino-acid chain: Protoheme IX farnesyltransferase (307 aa).

8 consecutive transmembrane segments (helical) span residues 24-44 (ISLL…VGLV), 52-72 (PVIA…AGAL), 115-135 (VVLG…TIFF), 152-172 (IVIG…AASG), 179-199 (VILV…LSLY), 224-244 (QILL…MLGE), 245-265 (AGLA…LLAV), and 284-304 (FGFS…EALV).

Belongs to the UbiA prenyltransferase family. Protoheme IX farnesyltransferase subfamily.

The protein localises to the cell inner membrane. The catalysed reaction is heme b + (2E,6E)-farnesyl diphosphate + H2O = Fe(II)-heme o + diphosphate. Its pathway is porphyrin-containing compound metabolism; heme O biosynthesis; heme O from protoheme: step 1/1. Functionally, converts heme B (protoheme IX) to heme O by substitution of the vinyl group on carbon 2 of heme B porphyrin ring with a hydroxyethyl farnesyl side group. This Azorhizobium caulinodans (strain ATCC 43989 / DSM 5975 / JCM 20966 / LMG 6465 / NBRC 14845 / NCIMB 13405 / ORS 571) protein is Protoheme IX farnesyltransferase.